The primary structure comprises 557 residues: Glutamine--tRNA ligase (557 aa).

The short motif at 42–52 is the 'HIGH' region element; the sequence is PEPNGYLHIGH. ATP contacts are provided by residues 43 to 45 and 49 to 55; these read EPN and HIGHAKS. L-glutamine-binding residues include Asp75 and Tyr220. Residues Thr239 and 270-271 contribute to the ATP site; that span reads RL. Residues 277-281 carry the 'KMSKS' region motif; sequence LTSKR.

The protein belongs to the class-I aminoacyl-tRNA synthetase family. Monomer.

It localises to the cytoplasm. The enzyme catalyses tRNA(Gln) + L-glutamine + ATP = L-glutaminyl-tRNA(Gln) + AMP + diphosphate. This chain is Glutamine--tRNA ligase, found in Haemophilus influenzae (strain 86-028NP).